A 182-amino-acid chain; its full sequence is Ferritin heavy chain (182 aa).

At Met1 the chain carries N-acetylmethionine. An N-acetylthreonine; in Ferritin heavy chain, N-terminally processed modification is found at Thr2. In terms of domain architecture, Ferritin-like diiron spans 11-160; it reads QNYHQDAEAA…DHVTNLRKMG (150 aa). Fe cation-binding residues include Glu28, Glu63, His66, Glu108, and Gln142.

Belongs to the ferritin family. As to quaternary structure, oligomer of 24 subunits. There are two types of subunits: L (light) chain and H (heavy) chain. The major chain can be light or heavy, depending on the species and tissue type. The functional molecule forms a roughly spherical shell with a diameter of 12 nm and contains a central cavity into which the insoluble mineral iron core is deposited. Interacts with NCOA4; NCOA4 promotes targeting of the iron-binding ferritin complex to autolysosomes following starvation or iron depletion.

Its subcellular location is the cytoplasm. The protein resides in the cytoplasmic vesicle. It localises to the autophagosome. It is found in the autolysosome. The enzyme catalyses 4 Fe(2+) + O2 + 4 H(+) = 4 Fe(3+) + 2 H2O. In terms of biological role, stores iron in a soluble, non-toxic, readily available form. Important for iron homeostasis. Has ferroxidase activity. Iron is taken up in the ferrous form and deposited as ferric hydroxides after oxidation. Also plays a role in delivery of iron to cells. Mediates iron uptake in capsule cells of the developing kidney. Degraded to release iron upon autophagy activation by nutrient starvation. This is Ferritin heavy chain (Fth1) from Mus musculus (Mouse).